A 643-amino-acid chain; its full sequence is Threonine--tRNA ligase (643 aa).

Residues 1–61 form the TGS domain; it reads MPIITLPDGS…TEDSKLEIIT (61 aa). A catalytic region spans residues 243 to 534; it reads DHRKIGKALD…ITEEYAGFFP (292 aa). Zn(2+) contacts are provided by cysteine 334, histidine 385, and histidine 511.

The protein belongs to the class-II aminoacyl-tRNA synthetase family. In terms of assembly, homodimer. It depends on Zn(2+) as a cofactor.

It is found in the cytoplasm. The catalysed reaction is tRNA(Thr) + L-threonine + ATP = L-threonyl-tRNA(Thr) + AMP + diphosphate + H(+). In terms of biological role, catalyzes the attachment of threonine to tRNA(Thr) in a two-step reaction: L-threonine is first activated by ATP to form Thr-AMP and then transferred to the acceptor end of tRNA(Thr). Also edits incorrectly charged L-seryl-tRNA(Thr). In Pasteurella multocida (strain Pm70), this protein is Threonine--tRNA ligase.